A 144-amino-acid polypeptide reads, in one-letter code: Single-stranded DNA-binding protein 3 (144 aa).

Positions 1–103 constitute an SSB domain; it reads MNKVVLIGRL…IVAEEVQFLE (103 aa). The segment covering 112–134 has biased composition (polar residues); sequence MANDQFNNGNENGSMQLPDNNDI. The tract at residues 112–144 is disordered; the sequence is MANDQFNNGNENGSMQLPDNNDITPIDDGDIPF.

In terms of assembly, homotetramer.

This is Single-stranded DNA-binding protein 3 (ssb3) from Clostridium acetobutylicum (strain ATCC 824 / DSM 792 / JCM 1419 / IAM 19013 / LMG 5710 / NBRC 13948 / NRRL B-527 / VKM B-1787 / 2291 / W).